The chain runs to 144 residues: Large ribosomal subunit protein uL13 (144 aa).

This sequence belongs to the universal ribosomal protein uL13 family. In terms of assembly, part of the 50S ribosomal subunit.

This protein is one of the early assembly proteins of the 50S ribosomal subunit, although it is not seen to bind rRNA by itself. It is important during the early stages of 50S assembly. This chain is Large ribosomal subunit protein uL13, found in Oleidesulfovibrio alaskensis (strain ATCC BAA-1058 / DSM 17464 / G20) (Desulfovibrio alaskensis).